We begin with the raw amino-acid sequence, 269 residues long: Octanoyltransferase LipM (269 aa).

The BPL/LPL catalytic domain occupies Asn-31–Phe-239. Cys-141 acts as the Acyl-thioester intermediate in catalysis.

The protein belongs to the octanoyltransferase LipM family. As to quaternary structure, monomer.

It catalyses the reaction octanoyl-[ACP] + L-lysyl-[protein] = N(6)-octanoyl-L-lysyl-[protein] + holo-[ACP] + H(+). It functions in the pathway protein modification; protein lipoylation via endogenous pathway; protein N(6)-(lipoyl)lysine from octanoyl-[acyl-carrier-protein]. Functionally, catalyzes the transfer of endogenously produced octanoic acid from octanoyl-acyl-carrier-protein onto the lipoyl domain of GcvH, an intermediate carrier during protein lipoylation. In Carboxydothermus hydrogenoformans (strain ATCC BAA-161 / DSM 6008 / Z-2901), this protein is Octanoyltransferase LipM.